The primary structure comprises 313 residues: Ribosomal RNA small subunit methyltransferase H (313 aa).

Residues 51-53 (GGH), Asp71, Phe98, Asp119, and Gln126 contribute to the S-adenosyl-L-methionine site. A disordered region spans residues 293 to 313 (EEQRANPRSRSARLRVAERVS).

The protein belongs to the methyltransferase superfamily. RsmH family.

It localises to the cytoplasm. The catalysed reaction is cytidine(1402) in 16S rRNA + S-adenosyl-L-methionine = N(4)-methylcytidine(1402) in 16S rRNA + S-adenosyl-L-homocysteine + H(+). Its function is as follows. Specifically methylates the N4 position of cytidine in position 1402 (C1402) of 16S rRNA. This chain is Ribosomal RNA small subunit methyltransferase H, found in Roseiflexus sp. (strain RS-1).